The sequence spans 126 residues: MRHKIKGRKLNVTSSHRQAMLANMAVALVTHEQIKTTLPKAKELRPYIETLITKAKKADLTVRRSVLSKIKDKKAVEKLINILGTRYKDRPGGYTRIIKAGFRYGDLAPIAYIEFVDRDINAKGNI.

Belongs to the bacterial ribosomal protein bL17 family. Part of the 50S ribosomal subunit. Contacts protein L32.

The sequence is that of Large ribosomal subunit protein bL17 from Rickettsia felis (strain ATCC VR-1525 / URRWXCal2) (Rickettsia azadi).